Reading from the N-terminus, the 501-residue chain is Rhazimal synthase (501 aa).

Residues 4 to 24 (MQLSFASAVVYSLIFFVFLLV) form a helical membrane-spanning segment. Asn-282 carries N-linked (GlcNAc...) asparagine glycosylation. Cys-442 provides a ligand contact to heme.

It belongs to the cytochrome P450 family. Requires heme as cofactor.

Its subcellular location is the membrane. It carries out the reaction (19E)-geissoschizine + reduced [NADPH--hemoprotein reductase] + O2 = rhazimal + oxidized [NADPH--hemoprotein reductase] + 2 H2O + H(+). It catalyses the reaction (19E)-geissoschizine + reduced [NADPH--hemoprotein reductase] + O2 = akuammicine + formate + oxidized [NADPH--hemoprotein reductase] + H2O + H(+). The protein operates within alkaloid biosynthesis. In terms of biological role, a cytochrome P450 monooxygenase involved in the biosynthesis of akuammilan monoterpene indole alkaloids (MIAs) natural products, components with various biological properties such as antidiabetic, antibacterial, anti-inflammatory, anticancer, and antimalarial activities. Catalyzes the conversion of geissoschizine to rhazimal. Can also, with lower efficiency, support the conversion of geissoschizine to akuammicine. The sequence is that of Rhazimal synthase from Alstonia scholaris (Dogbane).